A 1370-amino-acid polypeptide reads, in one-letter code: Reverse gyrase 1 (1370 aa).

Residues 6–47 (AASRGVYRYLCPNCGGPNSEERLSRGLPCPRCLPRLPRKGVS) form an RG N-terminal-type zinc finger. Zn(2+) is bound by residues Cys-16, Cys-19, Cys-34, and Cys-37. ATP contacts are provided by residues Gln-95 and 112-119 (APTGVGKT). In terms of domain architecture, Helicase ATP-binding spans 99–287 (AKRLARGDSF…RKKLLEVKRR (189 aa)). Residues 220-223 (DDVD) carry the DEAD box motif. The interval 643 to 1370 (ELVRTALLVV…VSRVWGAGVG (728 aa)) is topoisomerase I. The region spanning 647–825 (TALLVVESPN…DIKRLEFHEV (179 aa)) is the Toprim domain. Residue Glu-653 participates in Mg(2+) binding. The segment at 744-772 (IKRCLDCGYQFVDEASRCPRCGSELIRNS) adopts an RG C-terminal-type zinc-finger fold. Cys-747, Cys-750, Cys-761, and Cys-764 together coordinate Zn(2+). A Mg(2+)-binding site is contributed by Asp-794. Residues 841–1323 (DDNLVDAQVV…SVFNEISDLA (483 aa)) form the Topo IA-type catalytic domain. The active-site O-(5'-phospho-DNA)-tyrosine intermediate is the Tyr-1028.

The protein in the N-terminal section; belongs to the DEAD box helicase family. DDVD subfamily. It in the C-terminal section; belongs to the type IA topoisomerase family. In terms of assembly, monomer. It depends on Zn(2+) as a cofactor. The cofactor is Mg(2+).

It localises to the cytoplasm. The catalysed reaction is ATP + H2O = ADP + phosphate + H(+). Its function is as follows. Modifies the topological state of DNA by introducing positive supercoils in an ATP-dependent process, increasing the linking number in steps of +1. Binds to single-stranded DNA, transiently cleaves and then rejoins the ends, introducing a positive supercoil in the process. The scissile phosphodiester is attacked by the catalytic tyrosine of the enzyme, resulting in the formation of a DNA-(5'-phosphotyrosyl)-enzyme intermediate. Probably involved in rewinding DNA strands in regions of the chromosome that have opened up to allow replication, transcription, DNA repair and/or for DNA protection. The chain is Reverse gyrase 1 from Aeropyrum pernix (strain ATCC 700893 / DSM 11879 / JCM 9820 / NBRC 100138 / K1).